A 340-amino-acid chain; its full sequence is Probable allantoicase (340 aa).

This sequence belongs to the allantoicase family.

The catalysed reaction is allantoate + H2O = (S)-ureidoglycolate + urea. The protein operates within nitrogen metabolism; (S)-allantoin degradation; (S)-ureidoglycolate from allantoate (aminidohydrolase route): step 1/1. In Rhizobium meliloti (strain 1021) (Ensifer meliloti), this protein is Probable allantoicase.